The following is a 179-amino-acid chain: FAD-dependent monooxygenase nscC (179 aa).

Positions 1–21 (MGKQQETILIIGAGISGLATS) are cleaved as a signal peptide. E35 and A46 together coordinate FAD. The N-linked (GlcNAc...) asparagine glycan is linked to N92. FAD is bound at residue R119. N-linked (GlcNAc...) asparagine glycosylation occurs at N170.

It belongs to the paxM FAD-dependent monooxygenase family. The cofactor is FAD.

It participates in secondary metabolite biosynthesis. Functionally, FAD-dependent monooxygenase; part of the gene cluster that mediates the biosynthesis of neosartoricin B, a prenylated anthracenone that probably exhibits T-cell antiproliferative activity, suggestive of a physiological role as an immunosuppressive agent. The non-reducing polyketide synthase nscA probably synthesizes and cyclizes the decaketide backbone. The hydrolase nscB then mediates the product release through hydrolysis followed by spontaneous decarboxylation. The prenyltransferase nscD catalyzes the addition of the dimethylallyl group to the aromatic C5. The FAD-dependent monooxygenase nscC is then responsible for the stereospecific hydroxylation at C2. Neosartoricin B can be converted into two additional compounds neosartoricins C and D. Neosartoricin C is a spirocyclic compound that is cyclized through the attack of C3 hydroxyl on C14, followed by dehydration. On the other hand, neosartoricin D is a further cyclized compound in which attack of C2 on C14 in neosartoricin C results in the formation of the acetal-containing dioxabicyclo-octanone ring. Both of these compounds are novel and possibly represent related metabolites of the gene cluster. This is FAD-dependent monooxygenase nscC from Trichophyton equinum (strain ATCC MYA-4606 / CBS 127.97) (Horse ringworm fungus).